Here is a 687-residue protein sequence, read N- to C-terminus: Dictomallein (687 aa).

Disordered stretches follow at residues Met1–Leu45 and Thr73–Ala112. One can recognise a Peptidase M66 domain in the interval Pro233–Ala501. Residue His393 coordinates Zn(2+). Residue Glu394 is part of the active site. Residues His397 and His403 each coordinate Zn(2+).

The protein belongs to the dictomallein family. The cofactor is Zn(2+).

This chain is Dictomallein (dtmL), found in Burkholderia pseudomallei (strain 1710b).